The primary structure comprises 479 residues: ATP-dependent protease ATPase subunit HslU (479 aa).

ATP is bound by residues I32, 74–79 (GVGKTE), D290, E355, and R427.

The protein belongs to the ClpX chaperone family. HslU subfamily. A double ring-shaped homohexamer of HslV is capped on each side by a ring-shaped HslU homohexamer. The assembly of the HslU/HslV complex is dependent on binding of ATP.

It is found in the cytoplasm. Functionally, ATPase subunit of a proteasome-like degradation complex; this subunit has chaperone activity. The binding of ATP and its subsequent hydrolysis by HslU are essential for unfolding of protein substrates subsequently hydrolyzed by HslV. HslU recognizes the N-terminal part of its protein substrates and unfolds these before they are guided to HslV for hydrolysis. The sequence is that of ATP-dependent protease ATPase subunit HslU from Leptospira interrogans serogroup Icterohaemorrhagiae serovar copenhageni (strain Fiocruz L1-130).